A 284-amino-acid polypeptide reads, in one-letter code: 2-dehydro-3-deoxyphosphooctonate aldolase (284 aa).

It belongs to the KdsA family.

Its subcellular location is the cytoplasm. The catalysed reaction is D-arabinose 5-phosphate + phosphoenolpyruvate + H2O = 3-deoxy-alpha-D-manno-2-octulosonate-8-phosphate + phosphate. It functions in the pathway carbohydrate biosynthesis; 3-deoxy-D-manno-octulosonate biosynthesis; 3-deoxy-D-manno-octulosonate from D-ribulose 5-phosphate: step 2/3. The protein operates within bacterial outer membrane biogenesis; lipopolysaccharide biosynthesis. The polypeptide is 2-dehydro-3-deoxyphosphooctonate aldolase (Burkholderia orbicola (strain MC0-3)).